A 206-amino-acid chain; its full sequence is Pyrrolidone-carboxylate peptidase 2 (206 aa).

Active-site residues include glutamate 78, cysteine 141, and histidine 165.

This sequence belongs to the peptidase C15 family. As to quaternary structure, homotetramer.

It is found in the cytoplasm. The catalysed reaction is Release of an N-terminal pyroglutamyl group from a polypeptide, the second amino acid generally not being Pro.. Removes 5-oxoproline from various penultimate amino acid residues except L-proline. The chain is Pyrrolidone-carboxylate peptidase 2 from Caldanaerobacter subterraneus subsp. tengcongensis (strain DSM 15242 / JCM 11007 / NBRC 100824 / MB4) (Thermoanaerobacter tengcongensis).